We begin with the raw amino-acid sequence, 427 residues long: Indole diterpene prenyltransferase ptmD (427 aa).

77–78 (YV) serves as a coordination point for L-tryptophan. Residues Arg99, Lys186, Tyr188, Arg259, Lys261, Tyr263, Tyr344, Tyr409, and Tyr413 each contribute to the substrate site.

This sequence belongs to the tryptophan dimethylallyltransferase family.

The protein operates within secondary metabolite biosynthesis. Indole diterpene prenyltransferase; part of the gene cluster that mediates the biosynthesis of the indole diterpenes penitrems. The geranylgeranyl diphosphate (GGPP) synthase ptmG catalyzes the first step in penitrem biosynthesis via conversion of farnesyl pyrophosphate and isopentyl pyrophosphate into geranylgeranyl pyrophosphate (GGPP). Condensation of indole-3-glycerol phosphate with GGPP by the prenyl transferase ptmC then forms 3-geranylgeranylindole (3-GGI). Epoxidation by the FAD-dependent monooxygenase ptmM leads to a epoxidized-GGI that is substrate of the terpene cyclase ptmB for cyclization to yield paspaline. Paspaline is subsequently converted to 13-desoxypaxilline by the cytochrome P450 monooxygenase ptmP, the latter being then converted to paxilline by the cytochrome P450 monooxygenase ptmQ. Paxilline is converted to beta-paxitriol via C-10 ketoreduction by the short-chain dehydrogenase ptmH which can be monoprenylated at the C-20 by the indole diterpene prenyltransferase ptmD. A two-step elimination (acetylation and elimination) process performed by the O-acetyltransferase ptmV and ptmI leads to the production of the prenylated form of penijanthine. The FAD-linked oxidoreductase ptmO then converts the prenylated form of penijanthine into PC-M5 which is in turn transformed into PC-M4 by the aromatic dimethylallyltransferase ptmE. Five sequential oxidative transformations performed by the cytochrome P450 monooxygenases ptmK, ptmU, ptmL, ptmN and ptmJ yield the various penitrem compounds. PtmK, ptmU and ptmM are involved in the formation of the key bicyclic ring of penitrem C via the formation of the intermediates secopenitrem D and penitrem D. PtmL catalyzes the epoxidation of penitrem D and C to yield penitrem B and F, respectively. PtmJ catalyzes the last benzylic hydroxylation to convert penitrem B to prenitrem E and penitrem F to penitrem A. This is Indole diterpene prenyltransferase ptmD from Penicillium ochrochloron.